Consider the following 309-residue polypeptide: Foldase protein PrsA (309 aa).

Residues 1–20 form the signal peptide; that stretch reads MKKKIVAGAVTLLSVAVLAA. Cys-21 carries the N-palmitoyl cysteine lipid modification. Cys-21 carries the S-diacylglycerol cysteine lipid modification. A PpiC domain is found at 144-241; the sequence is TPEVTAQIIK…ASYYIVKLVS (98 aa).

It belongs to the PrsA family.

The protein localises to the cell membrane. It carries out the reaction [protein]-peptidylproline (omega=180) = [protein]-peptidylproline (omega=0). In terms of biological role, plays a major role in protein secretion by helping the post-translocational extracellular folding of several secreted proteins. This is Foldase protein PrsA from Streptococcus gordonii (strain Challis / ATCC 35105 / BCRC 15272 / CH1 / DL1 / V288).